The primary structure comprises 392 residues: General receptor for phosphoinositides 1-associated scaffold protein (392 aa).

The disordered stretch occupies residues 1–50 (MTLRRLRKLQQKEEATAAPDPAGRAPDSEAARAAPLPSGPPAAAAPPGAP). Pro residues predominate over residues 37–49 (PSGPPAAAAPPGA). Thr-76 is subject to Phosphothreonine. A Phosphoserine modification is found at Ser-93. Residues 100–189 (VLTLEKGDNQ…VLRLETLYGT (90 aa)) enclose the PDZ domain. Residues 180–257 (VLRLETLYGT…GAGLLPGSLP (78 aa)) are interaction with PSCD3. Tyr-236 bears the Phosphotyrosine mark. Arg-269 carries the post-translational modification Omega-N-methylarginine. Residues 294 to 315 (PQALPPPPPPARALGPSSAETP) form a disordered region. Ser-384 bears the Phosphoserine mark.

Heteromer. Composed of TAMALIN, CYTH2 and at least one GRM1. Also interacts with GRM2, GRM3 and GRM5. Interacts with CYTH3. Highly expressed in brain, heart and lung, and to a lower extent in embryo, kidney and ovary.

The protein localises to the cytoplasm. It is found in the perinuclear region. Its subcellular location is the cell membrane. It localises to the postsynaptic cell membrane. In terms of biological role, plays a role in intracellular trafficking and contributes to the macromolecular organization of group 1 metabotropic glutamate receptors (mGluRs) at synapses. This Mus musculus (Mouse) protein is General receptor for phosphoinositides 1-associated scaffold protein.